The following is a 336-amino-acid chain: Ketol-acid reductoisomerase (NADP(+)) (336 aa).

One can recognise a KARI N-terminal Rossmann domain in the interval 5-185 (SKIYTDKDSN…GATRAGVIPT (181 aa)). Residues 28–31 (YGSQ), Ser-56, and 86–89 (DMVQ) contribute to the NADP(+) site. His-111 is an active-site residue. Gly-137 contributes to the NADP(+) binding site. The 146-residue stretch at 186–331 (TFKEETETDL…NQLKDLIQKG (146 aa)) folds into the KARI C-terminal knotted domain. Residues Asp-194, Glu-198, Glu-230, and Glu-234 each coordinate Mg(2+). Ser-255 is a substrate binding site.

Belongs to the ketol-acid reductoisomerase family. Requires Mg(2+) as cofactor.

It catalyses the reaction (2R)-2,3-dihydroxy-3-methylbutanoate + NADP(+) = (2S)-2-acetolactate + NADPH + H(+). The enzyme catalyses (2R,3R)-2,3-dihydroxy-3-methylpentanoate + NADP(+) = (S)-2-ethyl-2-hydroxy-3-oxobutanoate + NADPH + H(+). The protein operates within amino-acid biosynthesis; L-isoleucine biosynthesis; L-isoleucine from 2-oxobutanoate: step 2/4. Its pathway is amino-acid biosynthesis; L-valine biosynthesis; L-valine from pyruvate: step 2/4. Functionally, involved in the biosynthesis of branched-chain amino acids (BCAA). Catalyzes an alkyl-migration followed by a ketol-acid reduction of (S)-2-acetolactate (S2AL) to yield (R)-2,3-dihydroxy-isovalerate. In the isomerase reaction, S2AL is rearranged via a Mg-dependent methyl migration to produce 3-hydroxy-3-methyl-2-ketobutyrate (HMKB). In the reductase reaction, this 2-ketoacid undergoes a metal-dependent reduction by NADPH to yield (R)-2,3-dihydroxy-isovalerate. The sequence is that of Ketol-acid reductoisomerase (NADP(+)) from Saccharolobus islandicus (strain Y.N.15.51 / Yellowstone #2) (Sulfolobus islandicus).